We begin with the raw amino-acid sequence, 55 residues long: MAKAATIKIKLLSSADTGVFYVTKKNSRTKTDKIVLKKYDPVARKHVEFRETKIK.

Belongs to the bacterial ribosomal protein bL33 family.

This chain is Large ribosomal subunit protein bL33, found in Azorhizobium caulinodans (strain ATCC 43989 / DSM 5975 / JCM 20966 / LMG 6465 / NBRC 14845 / NCIMB 13405 / ORS 571).